A 466-amino-acid polypeptide reads, in one-letter code: ATP synthase subunit beta (466 aa).

156-163 (GGAGVGKT) provides a ligand contact to ATP.

It belongs to the ATPase alpha/beta chains family. F-type ATPases have 2 components, CF(1) - the catalytic core - and CF(0) - the membrane proton channel. CF(1) has five subunits: alpha(3), beta(3), gamma(1), delta(1), epsilon(1). CF(0) has three main subunits: a(1), b(2) and c(9-12). The alpha and beta chains form an alternating ring which encloses part of the gamma chain. CF(1) is attached to CF(0) by a central stalk formed by the gamma and epsilon chains, while a peripheral stalk is formed by the delta and b chains.

The protein resides in the cell inner membrane. The enzyme catalyses ATP + H2O + 4 H(+)(in) = ADP + phosphate + 5 H(+)(out). Produces ATP from ADP in the presence of a proton gradient across the membrane. The catalytic sites are hosted primarily by the beta subunits. This Dechloromonas aromatica (strain RCB) protein is ATP synthase subunit beta.